The primary structure comprises 412 residues: Alpha-2,8-sialyltransferase 8E (412 aa).

Residues 1 to 16 (MRYADPSANRDLLGNR) are Cytoplasmic-facing. The helical; Signal-anchor for type II membrane protein transmembrane segment at 17–37 (TLLFIFICAFALVTLLQQILY) threads the bilayer. Topologically, residues 38 to 412 (SKSYIKRGFQ…RVHTGTCNCC (375 aa)) are lumenal. 4 N-linked (GlcNAc...) asparagine glycosylation sites follow: Asn58, Asn64, Asn73, and Asn92. Cystine bridges form between Cys200/Cys349 and Cys214/Cys409. Substrate contacts are provided by residues Asn228 and 250–252 (NPS). Asn277 carries N-linked (GlcNAc...) asparagine glycosylation. Substrate is bound at residue 336-338 (STG). His384 functions as the Proton donor/acceptor in the catalytic mechanism.

The protein belongs to the glycosyltransferase 29 family. As to expression, highly expressed in brain. Expressed at low levels in other tissues, including liver, testis, lung, placenta and spleen.

The protein resides in the golgi apparatus membrane. The enzyme catalyses a ganglioside GT1b (d18:1(4E)) + CMP-N-acetyl-beta-neuraminate = a ganglioside GQ1b (d18:1(4E)) + CMP + H(+). It carries out the reaction a ganglioside GD3 (d18:1(4E)) + CMP-N-acetyl-beta-neuraminate = a ganglioside GT3 (d18:1(4E)) + CMP + H(+). It catalyses the reaction a ganglioside GD1a (d18:1(4E)) + CMP-N-acetyl-beta-neuraminate = a ganglioside GT1a (d18:1(4E)) + CMP + H(+). The catalysed reaction is a ganglioside GM1b (d18:1(4E)) + CMP-N-acetyl-beta-neuraminate = a ganglioside GD1c (d18:1(4E)) + CMP + H(+). The enzyme catalyses a ganglioside GQ1c (d18:1(4E)) + CMP-N-acetyl-beta-neuraminate = a ganglioside GP1c (d18:1(4E)) + CMP + H(+). It participates in protein modification; protein glycosylation. Its function is as follows. Involved in the synthesis of gangliosides GD1c, GT1a, GQ1b, GP1c and GT3 from GD1a, GT1b, GM1b and GD3 respectively. The polypeptide is Alpha-2,8-sialyltransferase 8E (Mus musculus (Mouse)).